Here is a 411-residue protein sequence, read N- to C-terminus: Growth-regulating factor 7 (411 aa).

Residues 38–73 (PFTPTQWMELEHQALIYKHIVANAPVPAGLLLPIRR) enclose the QLQ domain. In terms of domain architecture, WRC spans 108–152 (DSEPGRCRRTDGKKWRCSRDAVVDQKYCERHINRGRHRSRKHVEG). 2 short sequence motifs (bipartite nuclear localization signal) span residues 113–123 (RCRRTDGKKWR) and 141–148 (RGRHRSRK). The interval 333 to 369 (FFTNTSSASDDKGKSRHPPSLNLLADGHTTSPQLQSP) is disordered. Residues 360–369 (HTTSPQLQSP) show a composition bias toward polar residues.

This sequence belongs to the GRF family.

It is found in the nucleus. Functionally, transcription activator that plays a regulatory role in gibberellin-induced stem elongation. The chain is Growth-regulating factor 7 (GRF7) from Oryza sativa subsp. japonica (Rice).